The chain runs to 1140 residues: MVGWVCISLVVLATTTAGLTRNLYELKIECPHTVGLGQGYVTGSVETTPILLTQVTDLKIESSCNFDLHVPSTSIQKYNQVEWAKKSSTTESTSAGATTFEAKTKEVSLKGTCNIPVTTFEAAYKSRKTVICYDLACNQTHCLPTVHLIAPVQTCMSVRSCMIGLLSSRIQVIYEKTYCVTGQLVEGLCFIPTHTIALTQPGHTYDTMTLPITCFLVAKKLGTQLKIAVELEKLITASGCTENSFQGYYICFLGKHSEPLFVPMMDDYRSAELFTRMVLNPRGEDHDPDQNGQGLMRIAGPITAKVPSTETTETMQGIAFAGAPMYSSFSTLVRKADPDYVFSPGIIAESNHSVCDKKTIPLTWTGFLAVSGEIEKITGCTVFCTLVGPGASCEAYSETGIFNISSPTCLVNKVQKFRGSEQRINFMCQRVDQDVIVYCNGQKKVILTKTLVIGQCIYTFTSLFSLIPGVAHSLAVELCVPGLHGWATTALLITFCFGWLLIPTITMIILKILRLLTFSCSHYSTESKFKAILERVKVEYQKTMGSMVCDVCHHECETAKELETHKKSCPEGQCPYCMTMTESTESALQAHFSICKLTNRFQENLKKSLKRPEVKQGCYRTLGVFRYKSRCYVGLVWGVLLTTELIVWAASADTPLMESGWSDTAHGVGIVPMKTDLELDFALASSSSYSYRRKLVNPANKEETLPFHFQLDKQVVHAEIQNLGHWMDGTFNIKTAFHCYGECKKYAYPWQTAKCFFEKDYQYETSWGCNPPDCPGVGTGCTACGVYLDKLRSVGKAYKIVSLKFTRKVCIQLGTEQTCKHIDVNDCLVTPSVKVCLIGTISKLQPGDTLLFLGPLEQGGIILKQWCTTSCVFGDPGDIMSTTTGMKCPEHTGSFRKICGFATTPTCEYQGNTISGFQRMMATRDSFQSFNVTEPHITSNRLEWIDPDSSIKDHINMVLNRDVSFQDLSDNPCKVDLHTQSIDGAWGSGVGFTLVCTVGLTECANFITSIKACDSAMCYGATVTNLLRGSNTVKVVGKGGHSGSLFKCCHDTDCTEEGLAASPPHLDRVTGYNQIDSDKVYDDGAPPCTIKCWFTKSGEWLLGILNGNWVVVAVLIVILILSILLFSFFCPIRGRKNKSN.

The N-terminal stretch at 1–17 (MVGWVCISLVVLATTTA) is a signal peptide. The Lumenal portion of the chain corresponds to 18 to 489 (GLTRNLYELK…VPGLHGWATT (472 aa)). 6 disulfides stabilise this stretch: cysteine 30–cysteine 155, cysteine 64–cysteine 161, cysteine 113–cysteine 132, cysteine 137–cysteine 142, cysteine 179–cysteine 189, and cysteine 214–cysteine 251. N-linked (GlcNAc...) asparagine; by host glycosylation occurs at asparagine 138. An N-linked (GlcNAc...) asparagine; by host glycan is attached at asparagine 351. 4 disulfide bridges follow: cysteine 380/cysteine 439, cysteine 384/cysteine 393, cysteine 409/cysteine 428, and cysteine 456/cysteine 479. A glycan (N-linked (GlcNAc...) asparagine; by host) is linked at asparagine 403. Residues 490–510 (ALLITFCFGWLLIPTITMIIL) traverse the membrane as a helical segment. Over 511–631 (KILRLLTFSC…LGVFRYKSRC (121 aa)) the chain is Cytoplasmic. Residues 520 to 537 (CSHYSTESKFKAILERVK) form a binding to the ribonucleoprotein region. 2 consecutive CCHC-type zinc fingers follow at residues 549–569 (CDVC…KKSC) and 574–595 (CPYC…FSIC). Binding to the ribonucleoprotein regions lie at residues 592–609 (FSIC…KKSL), 596–607 (KLTNRFQENLKK), and 615–629 (KQGC…RYKS). The segment at 611 to 638 (RPEVKQGCYRTLGVFRYKSRCYVGLVWG) is interaction with host TRAF3. Residues 615-638 (KQGCYRTLGVFRYKSRCYVGLVWG) enclose the ITAM domain. 2 positions are modified to phosphotyrosine; by host: tyrosine 619 and tyrosine 632. Residues 619–622 (YRTL) carry the YxxL motif. The chain crosses the membrane as a helical span at residues 632 to 652 (YVGLVWGVLLTTELIVWAASA). The Lumenal portion of the chain corresponds to 653–1108 (DTPLMESGWS…EWLLGILNGN (456 aa)). Intrachain disulfides connect cysteine 739-cysteine 774, cysteine 743-cysteine 781, cysteine 755-cysteine 888, cysteine 769-cysteine 899, cysteine 784-cysteine 907, cysteine 810-cysteine 819, cysteine 827-cysteine 836, and cysteine 867-cysteine 871. The tract at residues 761 to 781 (YQYETSWGCNPPDCPGVGTGC) is fusion loop. The N-linked (GlcNAc...) asparagine; by host glycan is linked to asparagine 931. Cystine bridges form between cysteine 973-cysteine 1003, cysteine 996-cysteine 1048, cysteine 1013-cysteine 1018, cysteine 1049-cysteine 1054, and cysteine 1088-cysteine 1092. A helical transmembrane segment spans residues 1109–1129 (WVVVAVLIVILILSILLFSFF). The binding to the ribonucleoprotein stretch occupies residues 1125-1140 (LFSFFCPIRGRKNKSN). Over 1130-1140 (CPIRGRKNKSN) the chain is Cytoplasmic.

It belongs to the hantavirus envelope glycoprotein family. In terms of assembly, homodimer. Homotetramer; forms heterotetrameric Gn-Gc spikes in the pre-fusion conformation. Interacts (via C-terminus) with the nucleoprotein. Interacts with host TUFM; this interaction contributes to the virus-induced degradation of mitochondria by autophagy, which leads to degradation of host MAVS and inhibition of type I interferon (IFN) responses. Interacts with host MAP1LC3B; this interaction contributes to the virus-induced degradation of mitochondria by autophagy, which leads to degradation of host MAVS and inhibition of type I interferon (IFN) responses. Interacts (via C-terminus) with host TRAF3 (via N-terminus); this interaction inhibits the formation of TRAF3-TBK1 complexes. Homodimer. Homotetramer; forms heterotetrameric Gn-Gc spikes in the pre-fusion conformation. Homotrimer; forms homotrimer in the post-fusion conformation at acidic pH. Interacts (via C-terminus) with the nucleoprotein. Post-translationally, envelope polyprotein precursor is quickly cleaved in vivo just after synthesis, presumably by host signal peptidase.

It localises to the virion membrane. The protein localises to the host cell surface. The protein resides in the host Golgi apparatus membrane. Its subcellular location is the host endoplasmic reticulum membrane. It is found in the host mitochondrion. Its function is as follows. Forms homotetramers with glycoprotein C at the surface of the virion. Attaches the virion to host cell receptors including integrin ITGAV/ITGB3. This attachment induces virion internalization predominantly through clathrin-dependent endocytosis. Mediates the assembly and budding of infectious virus particles through its interaction with the nucleocapsid protein and the viral genome. May dysregulate normal immune and endothelial cell responses through an ITAM motif. Translocates to mitochondria, binds to host TUFM and recruits MAP1LC3B. These interactions induce mitochondrial autophagy and therefore destruction of host MAVS leading to inhibition of type I interferon (IFN) responses. Concomitant breakdown of glycoprotein N is apparently prevented by the nucleoprotein that may inhibit Gn-stimulated autophagosome-lysosome fusion. Interacts with the viral genomic RNA. Inhibits the host RIG-I/TBK1 pathway by disrupting the formation of TBK1-TRAF3 complexes and downstream signaling responses required for IFN-beta transcription. Functionally, forms homotetramers with glycoprotein N at the surface of the virion. Attaches the virion to host cell receptors including integrin ITGAV/ITGB3. This attachment induces virion internalization predominantly through clathrin-dependent endocytosis. Class II fusion protein that promotes fusion of viral membrane with host endosomal membrane after endocytosis of the virion. This chain is Envelopment polyprotein (GP), found in Homo sapiens (Human).